We begin with the raw amino-acid sequence, 836 residues long: CUB domain-containing protein 1 (836 aa).

The signal sequence occupies residues 1–29 (MAGLNCGVSIALLGVLLLGAARLPRGAEA). Topologically, residues 30 to 667 (FEIALPRESN…TLTPRTVDLT (638 aa)) are extracellular. Residues N39, N122, N180, N205, N270, N310, and N386 are each glycosylated (N-linked (GlcNAc...) asparagine). The 128-residue stretch at 417–544 (CTDHRYCQRK…VSFIPYFKEE (128 aa)) folds into the CUB domain. C476 and C499 are joined by a disulfide. The helical transmembrane segment at 668-688 (VILIAAVGGGVLLLSALGLII) threads the bilayer. At 689–836 (CCVKKKKKKT…NTQEPMEPAE (148 aa)) the chain is on the cytoplasmic side. Position 734 is a phosphotyrosine (Y734). Residues 776–836 (PPTICSRAPT…NTQEPMEPAE (61 aa)) are disordered.

In terms of assembly, interacts with CDH2/N-cadherin, CDH3/P-cadherin, SDC1/syndecan-1, SDC4/syndecan-4 and the serine protease ST14/MT-SP1. Also interacts with SRC and PRKCG/protein kinase C gamma. In terms of processing, phosphorylated on tyrosine by kinases of the SRC family such as SRC and YES as well as by the protein kinase C gamma/PRKCG. Dephosphorylated by phosphotyrosine phosphatases. Also phosphorylated by suramin, a heparin analog. Tyrosine phosphorylated in response to dissociation of integrin alpha-6 beta-4 from laminin-5. Post-translationally, N-glycosylated. A soluble form may also be produced by proteolytic cleavage at the cell surface (shedding). Another peptide of 80 kDa (p80) is present in cultured keratinocytes probably due to tryptic cleavage at an unidentified site on its N-terminal side. Converted to p80 by plasmin, a trypsin-like protease. As to expression, highly expressed in mitotic cells with low expression during interphase. Detected at highest levels in skeletal muscle and colon with lower levels in kidney, small intestine, placenta and lung. Up-regulated in a number of human tumor cell lines, as well as in colorectal cancer, breast carcinoma and lung cancer. Also expressed in cells with phenotypes reminiscent of mesenchymal stem cells and neural stem cells.

The protein resides in the cell membrane. The protein localises to the secreted. Functionally, may be involved in cell adhesion and cell matrix association. May play a role in the regulation of anchorage versus migration or proliferation versus differentiation via its phosphorylation. May be a novel marker for leukemia diagnosis and for immature hematopoietic stem cell subsets. Belongs to the tetraspanin web involved in tumor progression and metastasis. This is CUB domain-containing protein 1 (CDCP1) from Homo sapiens (Human).